We begin with the raw amino-acid sequence, 288 residues long: ATP synthase gamma chain (288 aa).

Belongs to the ATPase gamma chain family. F-type ATPases have 2 components, CF(1) - the catalytic core - and CF(0) - the membrane proton channel. CF(1) has five subunits: alpha(3), beta(3), gamma(1), delta(1), epsilon(1). CF(0) has three main subunits: a, b and c.

It localises to the cell inner membrane. Its function is as follows. Produces ATP from ADP in the presence of a proton gradient across the membrane. The gamma chain is believed to be important in regulating ATPase activity and the flow of protons through the CF(0) complex. This chain is ATP synthase gamma chain, found in Stutzerimonas stutzeri (strain A1501) (Pseudomonas stutzeri).